The primary structure comprises 1741 residues: Protein wings apart-like (1741 aa).

9 disordered regions span residues 68 to 100 (SPSQ…FFKS), 119 to 277 (CGAG…EVAA), 291 to 472 (SSTF…KPPK), 490 to 612 (KAAA…VQED), 675 to 810 (LAVL…ASVN), 823 to 963 (KAEA…QRGA), 1038 to 1068 (AAGK…STLR), 1112 to 1141 (SAAG…RVDR), and 1708 to 1741 (TSST…SSHR). A compositionally biased stretch (basic residues) spans 165 to 174 (RKRKSPKKKA). Positions 175 to 185 (ATTSASTPSTP) are enriched in low complexity. Phosphothreonine is present on threonine 258. Low complexity predominate over residues 309–334 (APSASASTSSQLPSASGSASNPPSAS). At serine 355 the chain carries Phosphoserine. Residues 367–377 (AHQNQLNQLSV) are compositionally biased toward polar residues. The segment covering 408–426 (AADSVDGSSAAVGGASAGD) has biased composition (low complexity). A compositionally biased stretch (acidic residues) spans 438–456 (PNEDEEEEEEEEDEEEEPP). The span at 503–512 (SRSKKHKHKQ) shows a compositional bias: basic residues. Composition is skewed to low complexity over residues 515–529 (AAGS…ATPA) and 553–568 (QHTP…LHPQ). The span at 586–604 (SQSSVLGSISSKGNSTPQL) shows a compositional bias: polar residues. Composition is skewed to low complexity over residues 796–810 (NAAA…ASVN) and 849–859 (QQVTQVLQQEP). The span at 860-873 (VPEEQETPDAEEEQ) shows a compositional bias: acidic residues. Residues 880–894 (PHTDHREHSPDHDPD) show a composition bias toward basic and acidic residues. Serine 888 carries the phosphoserine modification. 2 stretches are compositionally biased toward low complexity: residues 939-952 (GAAN…AAAA) and 1047-1065 (GDSP…SSAS). The segment covering 1117–1136 (SAGGTGATTGGGGATGGGGP) has biased composition (gly residues). Positions 1140-1648 (DRKTKDYYPV…EKYHTFMNLT (509 aa)) constitute a WAPL domain. A compositionally biased stretch (low complexity) spans 1708-1730 (TSSTTVGSGSAPSSTSATGTTRA).

Belongs to the WAPL family.

In terms of biological role, has a role in female meiotic chromosome segregation in females; proximal heterochromatin is involved in chromosome pairing during female meiosis. Is a dominant suppressor of both white and Stubble position-effect variegation (PEV), while it is a weak enhancer of brown variegation. The polypeptide is Protein wings apart-like (Drosophila melanogaster (Fruit fly)).